The sequence spans 242 residues: HTH domain-truncated transcriptional regulator QseD (242 aa).

It belongs to the LysR transcriptional regulatory family.

In terms of biological role, represses EHEC virulence expression. Down-regulates expression of LEE (locus of enterocyte effacement) and iraD genes, and alters AE (attaching and effacing) lesion formation. May regulate transcription through interactions with another HTH DNA-binding protein. This is HTH domain-truncated transcriptional regulator QseD (qseD) from Escherichia coli O157:H7.